The sequence spans 232 residues: Small ribosomal subunit protein uS2 (232 aa).

It belongs to the universal ribosomal protein uS2 family.

The chain is Small ribosomal subunit protein uS2 from Syntrophomonas wolfei subsp. wolfei (strain DSM 2245B / Goettingen).